The following is a 473-amino-acid chain: Dynein axonemal assembly factor 11 (473 aa).

LRR repeat units lie at residues 22–43 (SLEE…DKWC), 45–66 (DLKI…SKLK), 67–88 (KLEY…EGCE), and 89–110 (WLTK…KTLT). One can recognise an LRRCT domain in the interval 123–161 (NPCADFDGYRQFVVVTLQQLKWLDGKEIERSERIQALQN). Positions 153–205 (SERIQALQNYTSVEQQIREQEKAYCLRRAKEKEEAQRKLEEENESEDKKKSST) form a coiled coil. Composition is skewed to basic and acidic residues over residues 188 to 202 (QRKL…DKKK) and 273 to 283 (EKQRKAQDKLS). 3 disordered regions span residues 188–244 (QRKL…TKES), 273–292 (EKQR…AKPP), and 387–473 (VGEM…PPLI). Residues 305 to 402 (VNEAKLDFSL…GGQRTPTSVK (98 aa)) form the CS domain. Residues 397-408 (TPTSVKTTSTSS) show a composition bias toward low complexity. Over residues 417-431 (KQIERLEVDPSKHSC) the composition is skewed to basic and acidic residues. Over residues 456–467 (PSEEDPDFEDNP) the composition is skewed to acidic residues.

The protein belongs to the tilB family. As to quaternary structure, interacts (via CS domain) with ZMYND10 (via C-terminus). Mainly expressed in cells with motile cilia. Expressed in epithelial cells of the trachea, testis and ependymal cells of the cerebral ventricles. In testis, abundant expression in late prophase of meiosis I with a dramatic decrease after the first meiotic division (at protein level).

The protein resides in the cytoplasm. The protein localises to the cell projection. It is found in the cilium. Its subcellular location is the dynein axonemal particle. It localises to the flagellum. Its function is as follows. Involved in dynein arm assembly, is important for expression and transporting outer dynein arm (ODA) proteins from the cytoplasm to the cilia. Acts as a crucial component in the formation and motility of spermatozoal flagella. In Mus musculus (Mouse), this protein is Dynein axonemal assembly factor 11 (Dnaaf11).